We begin with the raw amino-acid sequence, 197 residues long: UPF0301 protein A2cp1_4106 (197 aa).

This sequence belongs to the UPF0301 (AlgH) family.

The protein is UPF0301 protein A2cp1_4106 of Anaeromyxobacter dehalogenans (strain 2CP-1 / ATCC BAA-258).